Consider the following 338-residue polypeptide: Probable tRNA pseudouridine synthase B (338 aa).

D82 serves as the catalytic Nucleophile. The PUA domain occupies 250–325 (LPKVWIRDSA…IAVDVDKVFM (76 aa)).

This sequence belongs to the pseudouridine synthase TruB family. Type 2 subfamily.

The catalysed reaction is uridine(55) in tRNA = pseudouridine(55) in tRNA. Its function is as follows. Could be responsible for synthesis of pseudouridine from uracil-55 in the psi GC loop of transfer RNAs. This Thermococcus kodakarensis (strain ATCC BAA-918 / JCM 12380 / KOD1) (Pyrococcus kodakaraensis (strain KOD1)) protein is Probable tRNA pseudouridine synthase B.